A 292-amino-acid polypeptide reads, in one-letter code: 2-(5''-triphosphoribosyl)-3'-dephosphocoenzyme-A synthase (292 aa).

Belongs to the CitG/MdcB family.

It catalyses the reaction 3'-dephospho-CoA + ATP = 2'-(5''-triphospho-alpha-D-ribosyl)-3'-dephospho-CoA + adenine. Catalyzes the formation of 2-(5''-triphosphoribosyl)-3'-dephosphocoenzyme-A, the precursor of the prosthetic group of the holo-acyl carrier protein (gamma chain) of citrate lyase, from ATP and dephospho-CoA. In Escherichia coli (strain ATCC 8739 / DSM 1576 / NBRC 3972 / NCIMB 8545 / WDCM 00012 / Crooks), this protein is 2-(5''-triphosphoribosyl)-3'-dephosphocoenzyme-A synthase.